The chain runs to 183 residues: Glutathione-regulated potassium-efflux system ancillary protein KefG (183 aa).

It belongs to the NAD(P)H dehydrogenase (quinone) family. KefG subfamily. In terms of assembly, interacts with KefB.

Its subcellular location is the cell inner membrane. The catalysed reaction is a quinone + NADH + H(+) = a quinol + NAD(+). It carries out the reaction a quinone + NADPH + H(+) = a quinol + NADP(+). In terms of biological role, regulatory subunit of a potassium efflux system that confers protection against electrophiles. Required for full activity of KefB. The chain is Glutathione-regulated potassium-efflux system ancillary protein KefG from Enterobacter sp. (strain 638).